A 29-amino-acid chain; its full sequence is Amelogenin-like protein (29 aa).

Serine 16 carries the phosphoserine modification.

It belongs to the amelogenin family.

It is found in the secreted. It localises to the extracellular space. The protein localises to the extracellular matrix. Tooth enamel proteins are produced in ameloblasts and play a role in biomineralization. The protein is Amelogenin-like protein (AMEL) of Oryctolagus cuniculus (Rabbit).